The following is a 252-amino-acid chain: uncharacterized protein (252 aa).

The protein resides in the plastid. Its subcellular location is the chloroplast. This is an uncharacterized protein from Guillardia theta (Cryptophyte).